The chain runs to 474 residues: MNTAPFKLEADFASALPTMAAPWQGEEAPNPELVILNDDLAYSLGLDPTWLRTPEGVQFLLGLNPEPLTKAVAQAYSGHQFGQFVASLGDGRALLLGEARSADGVLHDIHLKGSGRTQFSRGADGRAVLGPVLREYIISEAMHALGVPTTRSLAVISTGRKIQRGSVAPGAVLVRVATSLIRVGSFQYSNISGGIELSQHLANYTITRHFPSLVAELSAPTPATYVSLFKAILQRQADTVGKWTRLGFVHGALNTDNTLISGETVDYGPCAFMERYRGDAKFSSIDTYGRYKFENQPMILGWNMARLVETLLPLLGATPDEGMTAAQEALVEFDDLCEQAIRKEFATALGLDESDTGTVEQFRELLYLHNPDITTLLRALTDNTAPPSGFEAFVHDWKTQDPDIEAMRAVNPLFIPRNHLVEAALADAVEGNLEKFHELLAAVTNPFDPTAGPDELRLPSEEGFEEDYMTFCGT.

ATP contacts are provided by G89, G91, R92, K112, D124, G125, R175, and R182. D256 functions as the Proton acceptor in the catalytic mechanism. Residues N257 and D266 each contribute to the Mg(2+) site. Residue D266 participates in ATP binding.

It belongs to the SELO family. Mg(2+) is required as a cofactor. The cofactor is Mn(2+).

It catalyses the reaction L-seryl-[protein] + ATP = 3-O-(5'-adenylyl)-L-seryl-[protein] + diphosphate. The catalysed reaction is L-threonyl-[protein] + ATP = 3-O-(5'-adenylyl)-L-threonyl-[protein] + diphosphate. The enzyme catalyses L-tyrosyl-[protein] + ATP = O-(5'-adenylyl)-L-tyrosyl-[protein] + diphosphate. It carries out the reaction L-histidyl-[protein] + UTP = N(tele)-(5'-uridylyl)-L-histidyl-[protein] + diphosphate. It catalyses the reaction L-seryl-[protein] + UTP = O-(5'-uridylyl)-L-seryl-[protein] + diphosphate. The catalysed reaction is L-tyrosyl-[protein] + UTP = O-(5'-uridylyl)-L-tyrosyl-[protein] + diphosphate. In terms of biological role, nucleotidyltransferase involved in the post-translational modification of proteins. It can catalyze the addition of adenosine monophosphate (AMP) or uridine monophosphate (UMP) to a protein, resulting in modifications known as AMPylation and UMPylation. In Corynebacterium glutamicum (strain ATCC 13032 / DSM 20300 / JCM 1318 / BCRC 11384 / CCUG 27702 / LMG 3730 / NBRC 12168 / NCIMB 10025 / NRRL B-2784 / 534), this protein is Protein nucleotidyltransferase YdiU.